The chain runs to 211 residues: Cytochrome c biogenesis ATP-binding export protein CcmA 2 (211 aa).

The 203-residue stretch at 6-208 (LEARELGVRR…GAVLDLATDA (203 aa)) folds into the ABC transporter domain. 38-45 (GPNGAGKT) contacts ATP.

It belongs to the ABC transporter superfamily. CcmA exporter (TC 3.A.1.107) family. In terms of assembly, the complex is composed of two ATP-binding proteins (CcmA) and two transmembrane proteins (CcmB).

Its subcellular location is the cell inner membrane. The enzyme catalyses heme b(in) + ATP + H2O = heme b(out) + ADP + phosphate + H(+). Its function is as follows. Part of the ABC transporter complex CcmAB involved in the biogenesis of c-type cytochromes; once thought to export heme, this seems not to be the case, but its exact role is uncertain. Responsible for energy coupling to the transport system. This Cupriavidus metallidurans (strain ATCC 43123 / DSM 2839 / NBRC 102507 / CH34) (Ralstonia metallidurans) protein is Cytochrome c biogenesis ATP-binding export protein CcmA 2.